A 1008-amino-acid chain; its full sequence is MRVHRFCVIVIFLTELLCFFYSSESQTTSRCHPHDLEALRDFIAHLEPKPDGWINSSSSTDCCNWTGITCNSNNTGRVIRLELGNKKLSGKLSESLGKLDEIRVLNLSRNFIKDSIPLSIFNLKNLQTLDLSSNDLSGGIPTSINLPALQSFDLSSNKFNGSLPSHICHNSTQIRVVKLAVNYFAGNFTSGFGKCVLLEHLCLGMNDLTGNIPEDLFHLKRLNLLGIQENRLSGSLSREIRNLSSLVRLDVSWNLFSGEIPDVFDELPQLKFFLGQTNGFIGGIPKSLANSPSLNLLNLRNNSLSGRLMLNCTAMIALNSLDLGTNRFNGRLPENLPDCKRLKNVNLARNTFHGQVPESFKNFESLSYFSLSNSSLANISSALGILQHCKNLTTLVLTLNFHGEALPDDSSLHFEKLKVLVVANCRLTGSMPRWLSSSNELQLLDLSWNRLTGAIPSWIGDFKALFYLDLSNNSFTGEIPKSLTKLESLTSRNISVNEPSPDFPFFMKRNESARALQYNQIFGFPPTIELGHNNLSGPIWEEFGNLKKLHVFDLKWNALSGSIPSSLSGMTSLEALDLSNNRLSGSIPVSLQQLSFLSKFSVAYNNLSGVIPSGGQFQTFPNSSFESNHLCGEHRFPCSEGTESALIKRSRRSRGGDIGMAIGIAFGSVFLLTLLSLIVLRARRRSGEVDPEIEESESMNRKELGEIGSKLVVLFQSNDKELSYDDLLDSTNSFDQANIIGCGGFGMVYKATLPDGKKVAIKKLSGDCGQIEREFEAEVETLSRAQHPNLVLLRGFCFYKNDRLLIYSYMENGSLDYWLHERNDGPALLKWKTRLRIAQGAAKGLLYLHEGCDPHILHRDIKSSNILLDENFNSHLADFGLARLMSPYETHVSTDLVGTLGYIPPEYGQASVATYKGDVYSFGVVLLELLTDKRPVDMCKPKGCRDLISWVVKMKHESRASEVFDPLIYSKENDKEMFRVLEIACLCLSENPKQRPTTQQLVSWLDDV.

The first 25 residues, 1–25, serve as a signal peptide directing secretion; sequence MRVHRFCVIVIFLTELLCFFYSSES. N-linked (GlcNAc...) asparagine glycosylation is found at Asn55, Asn64, and Asn73. 12 LRR repeats span residues 75 to 98, 99 to 123, 124 to 148, 150 to 170, 172 to 194, 195 to 219, 221 to 243, 244 to 266, 291 to 315, 316 to 339, 341 to 362, and 363 to 387; these read TGRV…SLGK, LDEI…IFNL, KNLQ…NLPA, QSFD…ICHN, TQIR…GFGK, CVLL…LFHL, RLNL…IRNL, SSLV…VFDE, SPSL…CTAM, IALN…LPDC, RLKN…SFKN, and FESL…GILQ. N-linked (GlcNAc...) asparagine glycosylation is present at Asn106. N-linked (GlcNAc...) asparagine glycosylation is found at Asn160, Asn170, and Asn187. Asn242 carries N-linked (GlcNAc...) asparagine glycosylation. Arg300 lines the phytosulfokine pocket. 2 N-linked (GlcNAc...) asparagine glycosylation sites follow: Asn301 and Asn311. Phytosulfokine is bound by residues Asn346, Ser370, and Ser372. N-linked (GlcNAc...) asparagine glycans are attached at residues Asn373, Asn378, and Asn391. 4 LRR repeats span residues 392–414, 415–438, 439–464, and 466–486; these read LTTL…SLHF, EKLK…LSSS, NELQ…DFKA, and FYLD…LTKL. Phytosulfokine contacts are provided by Thr398, Asn424, and Asp445. Asn472 and Asn493 each carry an N-linked (GlcNAc...) asparagine glycan. Lys508 provides a ligand contact to phytosulfokine. Asn510 and Asn534 each carry an N-linked (GlcNAc...) asparagine glycan. LRR repeat units lie at residues 521-545, 546-570, 571-594, and 596-619; these read IFGF…EFGN, LKKL…LSGM, TSLE…LQQL, and FLSK…QFQT. N-linked (GlcNAc...) asparagine glycosylation is found at Asn606 and Asn622. The helical transmembrane segment at 660-680 threads the bilayer; the sequence is MAIGIAFGSVFLLTLLSLIVL. Thr731 bears the Phosphothreonine mark. The Protein kinase domain occupies 734 to 1005; the sequence is FDQANIIGCG…PTTQQLVSWL (272 aa). ATP-binding positions include 740-748 and Lys762; that span reads IGCGGFGMV. Phosphotyrosine is present on residues Tyr807 and Tyr847. The active-site Proton acceptor is the Asp860. Tyr902 is subject to Phosphotyrosine.

Belongs to the protein kinase superfamily. Ser/Thr protein kinase family. As to quaternary structure, homo- and heterodimers with PSY1R. Heterodimers with the somatic embryogenesis receptor-like kinases (SERKs). PSK is not directly involved in PSKR-SERK interaction but stabilizes PSKR island domain for recruitment of a SERK. Part of a functional complex containing PSKR1, BAK1, CNGC17, and AHA. Interacts with AHA1, AHA2, and BAK1, but not with CNGC17 or BRI1. Mg(2+) is required as a cofactor. It depends on Mn(2+) as a cofactor. As to expression, weakly expressed in roots, leaves, stems and flowers. Expressed in the primary and lateral roots, including root primordia and root tips, but not in the hypocotyl.

The protein resides in the cell membrane. The enzyme catalyses L-seryl-[protein] + ATP = O-phospho-L-seryl-[protein] + ADP + H(+). The catalysed reaction is L-threonyl-[protein] + ATP = O-phospho-L-threonyl-[protein] + ADP + H(+). It carries out the reaction GTP = 3',5'-cyclic GMP + diphosphate. Its activity is regulated as follows. cGMP suppresses kinase activity. Its function is as follows. Phytosulfokine receptor with both a serine/threonine-protein kinase activity and a guanylate cyclase activity. Regulates, in response to phytosulfokine binding, a signaling cascade involved in plant cell differentiation, organogenesis, somatic embryogenesis, cellular proliferation and plant growth. Involved in plant immunity, with antagonistic effects on bacterial and fungal resistances. Not involved in PSY perception. CNGC17 and AHAs form a functional cation-translocating unit that is activated by PSKR1/BAK1 and possibly other BAK1/RLK complexes. The sequence is that of Phytosulfokine receptor 1 from Arabidopsis thaliana (Mouse-ear cress).